A 426-amino-acid chain; its full sequence is 3-phosphoshikimate 1-carboxyvinyltransferase (426 aa).

Lys22, Ser23, and Arg27 together coordinate 3-phosphoshikimate. Lys22 is a binding site for phosphoenolpyruvate. 2 residues coordinate phosphoenolpyruvate: Gly96 and Arg124. 3-phosphoshikimate is bound by residues Ser170, Ser171, Gln172, Ser198, Asp314, Asn337, and Lys341. Gln172 serves as a coordination point for phosphoenolpyruvate. Catalysis depends on Asp314, which acts as the Proton acceptor. The phosphoenolpyruvate site is built by Arg345, Arg387, and Lys412.

The protein belongs to the EPSP synthase family. In terms of assembly, monomer.

The protein resides in the cytoplasm. The enzyme catalyses 3-phosphoshikimate + phosphoenolpyruvate = 5-O-(1-carboxyvinyl)-3-phosphoshikimate + phosphate. It participates in metabolic intermediate biosynthesis; chorismate biosynthesis; chorismate from D-erythrose 4-phosphate and phosphoenolpyruvate: step 6/7. In terms of biological role, catalyzes the transfer of the enolpyruvyl moiety of phosphoenolpyruvate (PEP) to the 5-hydroxyl of shikimate-3-phosphate (S3P) to produce enolpyruvyl shikimate-3-phosphate and inorganic phosphate. The polypeptide is 3-phosphoshikimate 1-carboxyvinyltransferase (Shewanella sediminis (strain HAW-EB3)).